Consider the following 540-residue polypeptide: Protein PALS2 (540 aa).

2 consecutive L27 domains span residues 1–48 and 49–107; these read MQQV…EDSK and LEAV…YDSP. The PDZ domain occupies 130-209; the sequence is ILGIHKRAGE…SVTLKILPSY (80 aa). The SH3 domain maps to 215–284; that stretch reads PQQVFVKCHF…PSQFLEEKRK (70 aa). The 188-residue stretch at 338-525 folds into the Guanylate kinase-like domain; it reads RKTLVLIGAQ…AFEKLQTAIE (188 aa). At Tyr500 the chain carries Phosphotyrosine.

It belongs to the MAGUK family. In terms of assembly, interacts with CADM1. Interacts with the LIN7 proteins. Abundant in testis, brain, and kidney with lower levels detectable in other tissues.

The protein resides in the membrane. This is Protein PALS2 from Homo sapiens (Human).